Reading from the N-terminus, the 348-residue chain is Dihydroorotase (348 aa).

The Zn(2+) site is built by H17 and H19. Residues 19-21 (HLR) and N45 each bind substrate. 3 residues coordinate Zn(2+): K103, H140, and H178. An N6-carboxylysine modification is found at K103. H140 contributes to the substrate binding site. Substrate is bound at residue L223. D251 is a Zn(2+) binding site. The active site involves D251. Substrate is bound by residues H255 and A267.

Belongs to the metallo-dependent hydrolases superfamily. DHOase family. Class II DHOase subfamily. Homodimer. The cofactor is Zn(2+).

The enzyme catalyses (S)-dihydroorotate + H2O = N-carbamoyl-L-aspartate + H(+). It participates in pyrimidine metabolism; UMP biosynthesis via de novo pathway; (S)-dihydroorotate from bicarbonate: step 3/3. In terms of biological role, catalyzes the reversible cyclization of carbamoyl aspartate to dihydroorotate. This Shigella dysenteriae serotype 1 (strain Sd197) protein is Dihydroorotase.